The following is a 196-amino-acid chain: CASP-like protein 1D1 (196 aa).

Residues 1 to 18 (MASTDKPDRESIKSEEAP) show a composition bias toward basic and acidic residues. The segment at 1–22 (MASTDKPDRESIKSEEAPAAHP) is disordered. At 1–29 (MASTDKPDRESIKSEEAPAAHPRRSNYSS) the chain is on the cytoplasmic side. A helical membrane pass occupies residues 30-50 (VHVALRFLLFAASVTAVVVMV). Over 51-84 (TAKQTKIVPVPGLPISVPLEAKFSDSPAFLYFIS) the chain is Extracellular. A helical membrane pass occupies residues 85–105 (ALSVAGLYGILTTLAAISIVL). At 106 to 112 (KPAYATR) the chain is on the cytoplasmic side. Residues 113 to 133 (FLLHFALLDVLMLGIVASATG) traverse the membrane as a helical segment. At 134-167 (AAGGVAYVGLKGNSHVRWGKVCNVYDKFCQHVGS) the chain is on the extracellular side. Residues 168-188 (SIAVALFASVLLVLLTMLSVF) form a helical membrane-spanning segment. The Cytoplasmic segment spans residues 189–196 (SIYRKIPK).

The protein belongs to the Casparian strip membrane proteins (CASP) family. As to quaternary structure, homodimer and heterodimers.

Its subcellular location is the cell membrane. This is CASP-like protein 1D1 from Populus trichocarpa (Western balsam poplar).